The chain runs to 486 residues: Aromatic-L-amino-acid decarboxylase (486 aa).

Met-1 bears the N-acetylmethionine mark. Tandem repeats lie at residues 58–115 (QDVE…TELE) and 118–178 (MMDW…TQGA). Positions 58-178 (QDVEKIIMPG…AASPGLTQGA (121 aa)) are 2 X approximate tandem repeats. Residue Thr-82 coordinates substrate. The pyridoxal 5'-phosphate site is built by Ala-148 and Ser-149. His-192 provides a ligand contact to substrate. Positions 246 and 300 each coordinate pyridoxal 5'-phosphate. Lys-303 is modified (N6-(pyridoxal phosphate)lysine).

The protein belongs to the group II decarboxylase family. As to quaternary structure, homodimer. It depends on pyridoxal 5'-phosphate as a cofactor.

The catalysed reaction is L-dopa + H(+) = dopamine + CO2. It catalyses the reaction 5-hydroxy-L-tryptophan + H(+) = serotonin + CO2. The protein operates within catecholamine biosynthesis; dopamine biosynthesis; dopamine from L-tyrosine: step 2/2. Functionally, catalyzes the decarboxylation of L-3,4-dihydroxyphenylalanine (DOPA) to dopamine and L-5-hydroxytryptophan to serotonin. This is Aromatic-L-amino-acid decarboxylase (DDC) from Sus scrofa (Pig).